The chain runs to 465 residues: ATP synthase subunit beta (465 aa).

ATP is bound at residue 152–159 (GGAGVGKT).

This sequence belongs to the ATPase alpha/beta chains family. In terms of assembly, F-type ATPases have 2 components, CF(1) - the catalytic core - and CF(0) - the membrane proton channel. CF(1) has five subunits: alpha(3), beta(3), gamma(1), delta(1), epsilon(1). CF(0) has three main subunits: a(1), b(2) and c(9-12). The alpha and beta chains form an alternating ring which encloses part of the gamma chain. CF(1) is attached to CF(0) by a central stalk formed by the gamma and epsilon chains, while a peripheral stalk is formed by the delta and b chains.

It localises to the cell inner membrane. It catalyses the reaction ATP + H2O + 4 H(+)(in) = ADP + phosphate + 5 H(+)(out). Functionally, produces ATP from ADP in the presence of a proton gradient across the membrane. The catalytic sites are hosted primarily by the beta subunits. The sequence is that of ATP synthase subunit beta from Campylobacter curvus (strain 525.92).